We begin with the raw amino-acid sequence, 256 residues long: uncharacterized protein (256 aa).

29–36 serves as a coordination point for ATP; the sequence is GDDHSGKT.

This is an uncharacterized protein from Saccharomyces cerevisiae (strain ATCC 204508 / S288c) (Baker's yeast).